The following is a 601-amino-acid chain: ATP-dependent lipid A-core flippase (601 aa).

6 helical membrane-spanning segments follow: residues 35–55 (FAVAMVCMLIAGALTSSLAFL), 77–97 (LAIILIYLVKGGCSYFQAILM), 150–170 (AVTSLMKDSFTLICLVFVIFY), 173–193 (WQLAIIAMIVFPLTIYPIAKF), 263–283 (MEFLGGIGIAAIIFYGGYQVI), and 286–306 (SSTPGTFFSFLTALIMLYEPV). The region spanning 36-318 (AVAMVCMLIA…LTNVNNTIQQ (283 aa)) is the ABC transmembrane type-1 domain. Residues 352 to 585 (IEIRNISFAY…RGEYYKLHQL (234 aa)) form the ABC transporter domain. Residue 384 to 391 (GMSGGGKT) participates in ATP binding.

This sequence belongs to the ABC transporter superfamily. Lipid exporter (TC 3.A.1.106) family. As to quaternary structure, homodimer.

The protein resides in the cell inner membrane. It catalyses the reaction ATP + H2O + lipid A-core oligosaccharideSide 1 = ADP + phosphate + lipid A-core oligosaccharideSide 2.. Involved in lipopolysaccharide (LPS) biosynthesis. Translocates lipid A-core from the inner to the outer leaflet of the inner membrane. Transmembrane domains (TMD) form a pore in the inner membrane and the ATP-binding domain (NBD) is responsible for energy generation. This Syntrophus aciditrophicus (strain SB) protein is ATP-dependent lipid A-core flippase.